The following is a 119-amino-acid chain: Integration host factor subunit beta (119 aa).

The segment at 93–119 (AGGLADTQPDGDAPDQPQPTLLGLHAM) is disordered. Positions 97–112 (ADTQPDGDAPDQPQPT) are enriched in low complexity.

Belongs to the bacterial histone-like protein family. Heterodimer of an alpha and a beta chain.

This protein is one of the two subunits of integration host factor, a specific DNA-binding protein that functions in genetic recombination as well as in transcriptional and translational control. The chain is Integration host factor subunit beta from Bordetella petrii (strain ATCC BAA-461 / DSM 12804 / CCUG 43448).